The following is a 131-amino-acid chain: Glutaredoxin arsenate reductase (131 aa).

Catalysis depends on nucleophile residues cysteine 8 and cysteine 80. Cystine bridges form between cysteine 8–cysteine 80 and cysteine 80–cysteine 82.

It belongs to the low molecular weight phosphotyrosine protein phosphatase family. As to quaternary structure, homodimer.

The enzyme catalyses O-phospho-L-tyrosyl-[protein] + H2O = L-tyrosyl-[protein] + phosphate. The catalysed reaction is [glutaredoxin]-dithiol + arsenate + glutathione + H(+) = glutathionyl-S-S-[glutaredoxin] + arsenite + H2O. In terms of biological role, reduces arsenate [As(V)] to arsenite [As(III)] using glutathione and glutaredoxin as sources of reducing equivalents. GrxA is the most effective electron donor in vivo compared to other glutaredoxins. Constitutes the major arsenate reductase compared to ArsI1 and ArsI2. Also shows weak phosphatase activity toward p-nitrophenyl phosphate. The protein is Glutaredoxin arsenate reductase (arsC) of Synechocystis sp. (strain ATCC 27184 / PCC 6803 / Kazusa).